We begin with the raw amino-acid sequence, 245 residues long: Ribonuclease 3 (245 aa).

Residues 18 to 146 form the RNase III domain; sequence LSEFLENLSI…FVGAIYLDSG (129 aa). Mg(2+) is bound at residue E59. D63 is a catalytic residue. Mg(2+) is bound by residues D132 and E135. The active site involves E135. Residues 173–242 form the DRBM domain; it reads DYKSLLQEYV…AEVALKAMED (70 aa).

This sequence belongs to the ribonuclease III family. Homodimer. The cofactor is Mg(2+).

It localises to the cytoplasm. The catalysed reaction is Endonucleolytic cleavage to 5'-phosphomonoester.. Functionally, digests double-stranded RNA. Involved in the processing of primary rRNA transcript to yield the immediate precursors to the large and small rRNAs (23S and 16S). Processes some mRNAs, and tRNAs when they are encoded in the rRNA operon. Processes pre-crRNA and tracrRNA of type II CRISPR loci if present in the organism. The polypeptide is Ribonuclease 3 (Borreliella afzelii (strain PKo) (Borrelia afzelii)).